The chain runs to 338 residues: Large ribosomal subunit protein uL3 (338 aa).

The segment covering 228-237 (HKHRKGHRRT) has biased composition (basic residues). The interval 228 to 255 (HKHRKGHRRTGTIGPQAPALMFTQPRPG) is disordered.

Belongs to the universal ribosomal protein uL3 family. As to quaternary structure, part of the 50S ribosomal subunit. Forms a cluster with proteins L14 and L24e.

One of the primary rRNA binding proteins, it binds directly near the 3'-end of the 23S rRNA, where it nucleates assembly of the 50S subunit. The chain is Large ribosomal subunit protein uL3 from Pyrobaculum calidifontis (strain DSM 21063 / JCM 11548 / VA1).